A 129-amino-acid polypeptide reads, in one-letter code: MAKDTRSRKKVARRSVSEGIAHIHASFNNTIVTITDRQGNALAWATSGGQGFRGSRKSTPFAAQVAAEVAGKAAQEYGVKNIDVLVKGPGPGRESAVRALGALGYKVNSISDVTPIPHNGCRAPKKRRV.

Belongs to the universal ribosomal protein uS11 family. As to quaternary structure, part of the 30S ribosomal subunit. Interacts with proteins S7 and S18. Binds to IF-3.

Located on the platform of the 30S subunit, it bridges several disparate RNA helices of the 16S rRNA. Forms part of the Shine-Dalgarno cleft in the 70S ribosome. The polypeptide is Small ribosomal subunit protein uS11 (Psychrobacter arcticus (strain DSM 17307 / VKM B-2377 / 273-4)).